Reading from the N-terminus, the 335-residue chain is SAM pointed domain-containing Ets transcription factor (335 aa).

Residues 1–20 (MGSASPGLSSVSPSHLLLPP) show a composition bias toward low complexity. Disordered regions lie at residues 1–25 (MGSASPGLSSVSPSHLLLPPDTVSR) and 75–100 (AKAPGASSREEPPEEPEQCPVIDSQA). In terms of domain architecture, PNT spans 129-213 (EVLKDIETAC…AHLDIWKSAA (85 aa)). Positions 249-332 (IHLWQFLKEL…ISQRLVYQFV (84 aa)) form a DNA-binding region, ETS.

This sequence belongs to the ETS family. Interacts with the DNA-binding domain of the androgen receptor. Interacts with NKX3-1. Expressed in a very restricted set of primarily hormone-regulated epithelial tissues with particularly high expression in the prostate gland. Significantly lower expression is seen in other hormone regulated tissues such as mammary gland, salivary gland, and ovary. Expressed in prostate carcinoma cells.

The protein resides in the nucleus. Its function is as follows. May function as an androgen-independent transactivator of the prostate-specific antigen (PSA) promoter. Binds to 5'-GGAT-3' DNA sequences. May play a role in the regulation of the prostate gland and/or prostate cancer development. Acts as a transcriptional activator for SERPINB5 promoter. This is SAM pointed domain-containing Ets transcription factor (SPDEF) from Homo sapiens (Human).